The following is a 774-amino-acid chain: Effector protein hopW1-1 (774 aa).

2 disordered regions span residues 1–33 (MSPAQIIRTPHSFPPSFTGTSSSAENSHAQSPQ) and 301–340 (CQAGGNGQGQLEASSARPESLRYAPTRAASSGSEARVPGQ). A compositionally biased stretch (low complexity) spans 9–23 (TPHSFPPSFTGTSSS). The segment covering 24–33 (AENSHAQSPQ) has biased composition (polar residues).

It belongs to the HopW family. As to quaternary structure, interacts (via C-terminus) with Arabidopsis WIN1, WIN2 and WIN3.

The protein resides in the secreted. Functionally, induces hypersensitive response (HR). The chain is Effector protein hopW1-1 (hopW1-1) from Pseudomonas syringae pv. maculicola.